A 208-amino-acid chain; its full sequence is CKLF-like MARVEL transmembrane domain-containing protein 4 (208 aa).

A compositionally biased stretch (acidic residues) spans 1–11 (MRGGEELDGFE). The disordered stretch occupies residues 1-38 (MRGGEELDGFEGEASSTSMISGASSPYQPTTEPVSQRR). The span at 15 to 25 (SSTSMISGASS) shows a compositional bias: low complexity. In terms of domain architecture, MARVEL spans 49–176 (YLRGALGRLK…STFLAMQKWR (128 aa)). The next 4 helical transmembrane spans lie at 59-79 (VAQV…MECS), 85-105 (YFFE…LILF), 123-143 (LVNT…LAAL), and 151-171 (IAAV…TFLA). Serine 194 is modified (phosphoserine).

The protein belongs to the chemokine-like factor family. Interacts with PD1L1 and CMTM6.

The protein localises to the membrane. Functionally, acts as a backup for CMTM6 to regulate plasma membrane expression of PD-L1/CD274, an immune inhibitory ligand critical for immune tolerance to self and antitumor immunity. May protect PD-L1/CD274 from being polyubiquitinated and targeted for degradation. This is CKLF-like MARVEL transmembrane domain-containing protein 4 from Mus musculus (Mouse).